Reading from the N-terminus, the 321-residue chain is Serine/threonine-protein phosphatase PP1 (321 aa).

Mn(2+) is bound by residues Asp-60, His-62, Asp-88, and Asn-120. The active-site Proton donor is the His-121. Positions 169 and 244 each coordinate Mn(2+). The disordered stretch occupies residues Lys-298 to Lys-321.

This sequence belongs to the PPP phosphatase family. In terms of assembly, interacts with dpiA. The cofactor is Mn(2+).

The catalysed reaction is O-phospho-L-seryl-[protein] + H2O = L-seryl-[protein] + phosphate. It catalyses the reaction O-phospho-L-threonyl-[protein] + H2O = L-threonyl-[protein] + phosphate. With respect to regulation, inhibited by okadaic acid, tautomycin and calyculin A. Inhibited by phosphatase inhibitor 2 (dpiA). Functionally, protein phosphatase activity in vitro. The polypeptide is Serine/threonine-protein phosphatase PP1 (pppB) (Dictyostelium discoideum (Social amoeba)).